We begin with the raw amino-acid sequence, 498 residues long: Nucleobase transporter PlAzg2 (498 aa).

Transmembrane regions (helical) follow at residues 88–108 (LLAG…NSSI), 118–138 (AGII…GLWG), 142–162 (LVIV…VQGM), 169–189 (ALAA…TSLV), 203–223 (AISV…GGVI), 236–256 (FADP…ILYI), 259–279 (VPGN…LFKA), 312–332 (TLVI…VGLI), 357–377 (ILSG…AAGI), 388–408 (IATG…TLVP), 412–432 (VAPI…HISF), 443–463 (FIIA…IGFI), and 478–498 (VKPL…LQTM).

This sequence belongs to the nucleobase:cation symporter-2 (NCS2) (TC 2.A.40) family. Azg-like subfamily.

It is found in the cell membrane. With respect to regulation, inhibited by the proton gradient disruptor carbonyl cyanide m-chlorophenylhydrazone (CCCP), but not by the sodium gradient disruptor ouabain. Transports adenine, guanine, hypoxanthine, xanthine, cytosine and uracil. Transport is probably proton-dependent. The polypeptide is Nucleobase transporter PlAzg2 (Paenibacillus larvae subsp. larvae (strain NRRL B-3650 / LMG 16245)).